Here is a 243-residue protein sequence, read N- to C-terminus: Ubiquinone/menaquinone biosynthesis C-methyltransferase UbiE (243 aa).

Residues T69, D90, and 116 to 117 each bind S-adenosyl-L-methionine; that span reads DA.

It belongs to the class I-like SAM-binding methyltransferase superfamily. MenG/UbiE family.

The enzyme catalyses a 2-demethylmenaquinol + S-adenosyl-L-methionine = a menaquinol + S-adenosyl-L-homocysteine + H(+). The catalysed reaction is a 2-methoxy-6-(all-trans-polyprenyl)benzene-1,4-diol + S-adenosyl-L-methionine = a 5-methoxy-2-methyl-3-(all-trans-polyprenyl)benzene-1,4-diol + S-adenosyl-L-homocysteine + H(+). Its pathway is quinol/quinone metabolism; menaquinone biosynthesis; menaquinol from 1,4-dihydroxy-2-naphthoate: step 2/2. It functions in the pathway cofactor biosynthesis; ubiquinone biosynthesis. Methyltransferase required for the conversion of demethylmenaquinol (DMKH2) to menaquinol (MKH2) and the conversion of 2-polyprenyl-6-methoxy-1,4-benzoquinol (DDMQH2) to 2-polyprenyl-3-methyl-6-methoxy-1,4-benzoquinol (DMQH2). The polypeptide is Ubiquinone/menaquinone biosynthesis C-methyltransferase UbiE (Paraburkholderia phytofirmans (strain DSM 17436 / LMG 22146 / PsJN) (Burkholderia phytofirmans)).